The chain runs to 22 residues: Piscidin-3 (22 aa).

A Glycine amide modification is found at Gly22.

The protein belongs to the pleurocidin family. Mast cells in gill, skin and gut, and in lining blood vessels in the viscera.

The protein localises to the secreted. The protein resides in the membrane. Antimicrobial peptide with broad-spectrum activity against Gram-positive and Gram-negative bacteria. Rapidly inactivates both channel catfish herpesvirus (ED(50)=11 uM) and frog virus 3 (ED(50)=16 uM) over a wide temperature range. Has hemolytic activity. The polypeptide is Piscidin-3 (Morone chrysops x Morone saxatilis (White bass x Striped bass)).